The sequence spans 798 residues: Protocadherin beta-2 (798 aa).

An N-terminal signal peptide occupies residues 1 to 30; that stretch reads MEAGEGKERVPKQRQVLIFFVLLGIAQASC. At 31–692 the chain is on the extracellular side; that stretch reads QPRHYSVAEE…AQADLLTVYL (662 aa). Cadherin domains follow at residues 37–135, 136–244, 249–349, 354–453, and 458–563; these read VAEE…SPVF, LDKE…VPEF, YEVQ…PPEL, LINQ…APAF, and YTLF…SPFV. N-linked (GlcNAc...) asparagine glycosylation is present at Asn-171. Position 299 is an N6-acetyllysine (Lys-299). 2 N-linked (GlcNAc...) asparagine glycosylation sites follow: Asn-420 and Asn-438. Residue Asn-569 is glycosylated (N-linked (GlcNAc...) asparagine). A Cadherin 6 domain is found at 570–673; the sequence is GSAPCTELVP…LVDGFSQPYL (104 aa). The helical transmembrane segment at 693–713 threads the bilayer; sequence VVALASVSSLFLFSVLLFVAV. Topologically, residues 714 to 798 are cytoplasmic; it reads RLCRRSRAAS…PSFRKSFEFT (85 aa).

It is found in the cell membrane. Functionally, potential calcium-dependent cell-adhesion protein. May be involved in the establishment and maintenance of specific neuronal connections in the brain. The protein is Protocadherin beta-2 (PCDHB2) of Homo sapiens (Human).